The primary structure comprises 161 residues: Protein lin-52 (161 aa).

Residues 137–161 (TGSASPRYLQPTPPKNVAEETTGSQ) form a disordered region.

The protein belongs to the lin-52 family. Component of the DRM complex, at least composed of lin-9, lin-35, lin-37, lin-52, lin-53, lin-54- dpl-1 and efl-1. Interacts with zft-11; the interaction is required to suppress the activation of non-neuronal genes in neurons.

The protein resides in the nucleus. In terms of biological role, synthetic multivulva class B (synMuvB) protein. SynMuvB proteins are required to repress the induction of vulval development by Ras signaling and probably act by forming the multiprotein DRM complex that represses transcription. In association with the zinc finger protein ztf-11, negatively regulates the expression of non-neuronal genes during neurogenesis. The sequence is that of Protein lin-52 from Caenorhabditis elegans.